The chain runs to 1723 residues: Lymphocyte antigen 75 (1723 aa).

The signal sequence occupies residues 1-27; that stretch reads MRTGRVTPGLAAGLLLLLLRSFGLVEP. Residues 28 to 1667 are Extracellular-facing; the sequence is SESSGNDPFT…AVCKIPLSPD (1640 aa). One can recognise a Ricin B-type lectin domain in the interval 33-182; sequence NDPFTIVHEN…FLIGETWYHD (150 aa). A glycan (N-linked (GlcNAc...) asparagine) is linked at Asn135. Positions 164–211 constitute a Fibronectin type-II domain; it reads SYGRPCEFPFLIGETWYHDCIHDEDHSGPWCATTLSYEYDQKWGICLL. 4 disulfide bridges follow: Cys169–Cys194, Cys183–Cys209, Cys247–Cys340, and Cys317–Cys332. The C-type lectin 1 domain maps to 225 to 341; the sequence is QIGSCYQFNN…CESQQPYVCK (117 aa). Asn345 and Asn377 each carry an N-linked (GlcNAc...) asparagine glycan. C-type lectin domains follow at residues 368-486, 493-625, and 652-791; these read NNGF…YVCK, KDAE…ICKK, and SSLS…WVCQ. 2 disulfide bridges follow: Cys389–Cys485 and Cys462–Cys477. Asn529 carries N-linked (GlcNAc...) asparagine glycosylation. Cystine bridges form between Cys597–Cys614, Cys678–Cys790, and Cys752–Cys782. Asn843 and Asn865 each carry an N-linked (GlcNAc...) asparagine glycan. A Phosphotyrosine modification is found at Tyr934. Asn935, Asn1077, and Asn1104 each carry an N-linked (GlcNAc...) asparagine glycan. The 134-residue stretch at 959–1092 folds into the C-type lectin 5 domain; that stretch reads FQNKCFLKVN…ERHSLSLCQK (134 aa). A disulfide bond links Cys1061 and Cys1081. In terms of domain architecture, C-type lectin 6 spans 1111–1223; it reads YLNNLYKIIS…DNQPGAICYY (113 aa). A disulfide bond links Cys1198 and Cys1212. Residues Asn1226, Asn1321, and Asn1393 are each glycosylated (N-linked (GlcNAc...) asparagine). The C-type lectin 7 domain maps to 1252–1375; the sequence is FQNSCYNFMI…VIEETLHFYQ (124 aa). C-type lectin domains are found at residues 1402-1514 and 1543-1662; these read YKDG…ICYK and YGGH…VCKI. Residues Cys1489 and Cys1503 are joined by a disulfide bond. Residues Asn1594 and Asn1627 are each glycosylated (N-linked (GlcNAc...) asparagine). Residues Cys1636 and Cys1651 are joined by a disulfide bond. Residues 1668-1692 traverse the membrane as a helical segment; the sequence is YTGIAILFAVLCLLGLISLAIWFLL. Over 1693–1723 the chain is Cytoplasmic; sequence QRSHIRWTGFSSVRYEHGTNEDEVMLPSFHD. Phosphoserine occurs at positions 1704 and 1720.

In terms of processing, N-glycosylated. Expressed in dendritic and thymic epithelial cells and lymph nodes.

It is found in the membrane. In terms of biological role, acts as an endocytic receptor to direct captured antigens from the extracellular space to a specialized antigen-processing compartment. Causes reduced proliferation of B lymphocytes. This chain is Lymphocyte antigen 75 (Ly75), found in Mus musculus (Mouse).